Here is a 204-residue protein sequence, read N- to C-terminus: Sec-independent protein translocase protein TatB (204 aa).

Residues Met1–Gly21 form a helical membrane-spanning segment. Residues Val154 to Ser166 are compositionally biased toward polar residues. The segment at Val154 to Ser204 is disordered.

It belongs to the TatB family. The Tat system comprises two distinct complexes: a TatABC complex, containing multiple copies of TatA, TatB and TatC subunits, and a separate TatA complex, containing only TatA subunits. Substrates initially bind to the TatABC complex, which probably triggers association of the separate TatA complex to form the active translocon.

It is found in the cell inner membrane. Functionally, part of the twin-arginine translocation (Tat) system that transports large folded proteins containing a characteristic twin-arginine motif in their signal peptide across membranes. Together with TatC, TatB is part of a receptor directly interacting with Tat signal peptides. TatB may form an oligomeric binding site that transiently accommodates folded Tat precursor proteins before their translocation. The protein is Sec-independent protein translocase protein TatB of Mannheimia succiniciproducens (strain KCTC 0769BP / MBEL55E).